Here is a 245-residue protein sequence, read N- to C-terminus: Octanoyltransferase (245 aa).

One can recognise a BPL/LPL catalytic domain in the interval 54-238 (GEATELVWLL…AFENIFGETR (185 aa)). Residues 92–99 (RGGQLTYH), 167–169 (AIG), and 180–182 (GIA) contribute to the substrate site. Residue C198 is the Acyl-thioester intermediate of the active site.

This sequence belongs to the LipB family.

Its subcellular location is the cytoplasm. It carries out the reaction octanoyl-[ACP] + L-lysyl-[protein] = N(6)-octanoyl-L-lysyl-[protein] + holo-[ACP] + H(+). It functions in the pathway protein modification; protein lipoylation via endogenous pathway; protein N(6)-(lipoyl)lysine from octanoyl-[acyl-carrier-protein]: step 1/2. Catalyzes the transfer of endogenously produced octanoic acid from octanoyl-acyl-carrier-protein onto the lipoyl domains of lipoate-dependent enzymes. Lipoyl-ACP can also act as a substrate although octanoyl-ACP is likely to be the physiological substrate. In Rhodopseudomonas palustris (strain TIE-1), this protein is Octanoyltransferase.